Consider the following 387-residue polypeptide: Alkanesulfonate monooxygenase (387 aa).

This sequence belongs to the SsuD family.

The catalysed reaction is an alkanesulfonate + FMNH2 + O2 = an aldehyde + FMN + sulfite + H2O + 2 H(+). In terms of biological role, catalyzes the desulfonation of aliphatic sulfonates. The polypeptide is Alkanesulfonate monooxygenase (Cupriavidus metallidurans (strain ATCC 43123 / DSM 2839 / NBRC 102507 / CH34) (Ralstonia metallidurans)).